Here is a 138-residue protein sequence, read N- to C-terminus: Small ribosomal subunit protein uS11c (138 aa).

Residues 1–21 (MTKSIPRIGSRRGGRIASRKN) are disordered. The segment covering 9-21 (GSRRGGRIASRKN) has biased composition (basic residues).

The protein belongs to the universal ribosomal protein uS11 family. Part of the 30S ribosomal subunit.

The protein localises to the plastid. It is found in the chloroplast. This Calycanthus floridus var. glaucus (Eastern sweetshrub) protein is Small ribosomal subunit protein uS11c.